Reading from the N-terminus, the 343-residue chain is Cytoplasmic tRNA 2-thiolation protein 1 (343 aa).

Belongs to the TtcA family. CTU1/NCS6/ATPBD3 subfamily.

Its subcellular location is the cytoplasm. The protein operates within tRNA modification; 5-methoxycarbonylmethyl-2-thiouridine-tRNA biosynthesis. In terms of biological role, plays a central role in 2-thiolation of mcm(5)S(2)U at tRNA wobble positions of tRNA(Lys), tRNA(Glu) and tRNA(Gln). Directly binds tRNAs and probably acts by catalyzing adenylation of tRNAs, an intermediate required for 2-thiolation. It is unclear whether it acts as a sulfurtransferase that transfers sulfur from thiocarboxylated URM1 onto the uridine of tRNAs at wobble position. This is Cytoplasmic tRNA 2-thiolation protein 1 from Drosophila virilis (Fruit fly).